Consider the following 629-residue polypeptide: MQYHEQFDVIVVGGGHAGTEAATAAARMGLNTLLLTHNIDTLGHMSCNPAIGGIGKGHLVKEVDALGGIMARAIDLGGIQFRTLNSSKGPAVRATRAQADRLLYKAVVRQMLENYPNLKIFQQACDDLIMDGDRVAGVVTQSGIRISGKTVVLTVGTFLNGLIHIGMENYKGGRAGDPPSIALAQRLRELPLRIDRLKTGTPPRIDARSVDLSVMQAQYGDDPRPVFSFIGDASQHPRQVPCYVTHTNERTHEVIRNNLDRSPMYAGVIEGIGPRYCPSIEDKITRFADKTAHQIFVEPEGLTTHELYPNGISTSLPFDVQVQIVRSVRGFENAHITRPGYAIEYDFFDPRDLKANMESKCIPNLFFAGQINGTTGYEEAAAQGLLAGLNAGLRAQEKDAWHPRRDQAYIGVMMDDLSTLGTREPYRMFTSRAEYRLLLREDNADLRLTGIGRELGLVDDERWGKFNAKMEQVEQERQRMRSTWIHPQHPSLEAVNALVNTPLTREQSLEELLRRPEVTYDALMAIEGVGPALPDTAAADQVEIQIKYAGYIERQHDEVEKQLRNENTLLPLDMNYRDVNGLSNEVIAKLNDAKPQTIGQASRISGITPAAISILLVHLKKHGLLRKTA.

Residue 13-18 (GGGHAG) coordinates FAD. 273 to 287 (GPRYCPSIEDKITRF) contributes to the NAD(+) binding site.

Belongs to the MnmG family. In terms of assembly, homodimer. Heterotetramer of two MnmE and two MnmG subunits. FAD is required as a cofactor.

It is found in the cytoplasm. Its function is as follows. NAD-binding protein involved in the addition of a carboxymethylaminomethyl (cmnm) group at the wobble position (U34) of certain tRNAs, forming tRNA-cmnm(5)s(2)U34. The chain is tRNA uridine 5-carboxymethylaminomethyl modification enzyme MnmG from Aeromonas hydrophila subsp. hydrophila (strain ATCC 7966 / DSM 30187 / BCRC 13018 / CCUG 14551 / JCM 1027 / KCTC 2358 / NCIMB 9240 / NCTC 8049).